The following is a 450-amino-acid chain: tRNA modification GTPase MnmE (450 aa).

(6S)-5-formyl-5,6,7,8-tetrahydrofolate contacts are provided by Arg-20, Glu-78, and Lys-117. Residues Gly-211–Gln-372 enclose the TrmE-type G domain. Residue Asn-221 coordinates K(+). Residues Asn-221–Thr-226, Thr-240–Thr-246, and Asp-265–Gly-268 contribute to the GTP site. Ser-225 contributes to the Mg(2+) binding site. 3 residues coordinate K(+): Thr-240, Ile-242, and Thr-245. Residue Thr-246 participates in Mg(2+) binding. Lys-450 lines the (6S)-5-formyl-5,6,7,8-tetrahydrofolate pocket.

This sequence belongs to the TRAFAC class TrmE-Era-EngA-EngB-Septin-like GTPase superfamily. TrmE GTPase family. Homodimer. Heterotetramer of two MnmE and two MnmG subunits. It depends on K(+) as a cofactor.

It is found in the cytoplasm. In terms of biological role, exhibits a very high intrinsic GTPase hydrolysis rate. Involved in the addition of a carboxymethylaminomethyl (cmnm) group at the wobble position (U34) of certain tRNAs, forming tRNA-cmnm(5)s(2)U34. This is tRNA modification GTPase MnmE from Thermotoga petrophila (strain ATCC BAA-488 / DSM 13995 / JCM 10881 / RKU-1).